The chain runs to 345 residues: Protein GAMETE CELL DEFECTIVE 1, mitochondrial (345 aa).

The transit peptide at M1–G43 directs the protein to the mitochondrion. The disordered stretch occupies residues L36 to P82.

It is found in the mitochondrion. In terms of biological role, essential for fertility (male and female gametophyte functions and development). Required for the integrity of female gametic mitochondria. Involved in embryo apical-basal patterning, and particularly dorsal-ventral patterning, during early embryogenesis, and endosperm free nucleus positioning and development as well as early endosperm development, probably by modulating the expression pattern of related genes (e.g. AL1, MYB3/AL2, CYP78A13/GE, PNH1, HAZ1, MPK6 and OSH1). Has function in triggering of endosperm programmed cell death (PCD) leading to syncytial endosperm cellularization and starchy endosperm cell maturation. Implicated in central vacuole dynamics necessary for microspore development leading to pollen production, and for pollen development and germination. This chain is Protein GAMETE CELL DEFECTIVE 1, mitochondrial, found in Oryza sativa subsp. indica (Rice).